Reading from the N-terminus, the 372-residue chain is Peptidyl-prolyl cis-trans isomerase D (372 aa).

A PPIase cyclophilin-type domain is found at 10–173 (FFDIQIGQQQ…TDVTIAECGE (164 aa)). Positions 174–193 (LTGEDYDNADKQTPDATGDP) are disordered. TPR repeat units follow at residues 215–248 (ASEL…LNEF), 268–304 (FTLH…ASAK), and 309–342 (AKVY…APSD).

Belongs to the cyclophilin-type PPIase family. PPIase D subfamily.

Its subcellular location is the cytoplasm. It carries out the reaction [protein]-peptidylproline (omega=180) = [protein]-peptidylproline (omega=0). Functionally, PPIases accelerate the folding of proteins. It catalyzes the cis-trans isomerization of proline imidic peptide bonds in oligopeptides. The protein is Peptidyl-prolyl cis-trans isomerase D (cpr6) of Emericella nidulans (strain FGSC A4 / ATCC 38163 / CBS 112.46 / NRRL 194 / M139) (Aspergillus nidulans).